The sequence spans 336 residues: Ornithine carbamoyltransferase, catabolic (336 aa).

Carbamoyl phosphate-binding positions include 57–60, Q84, R108, and 135–138; these read STRT and HPTQ. L-ornithine-binding positions include N169, D233, and 237 to 238; that span reads SM. Carbamoyl phosphate is bound by residues 275–276 and R322; that span reads CL.

This sequence belongs to the aspartate/ornithine carbamoyltransferase superfamily. OTCase family.

Its subcellular location is the cytoplasm. It carries out the reaction carbamoyl phosphate + L-ornithine = L-citrulline + phosphate + H(+). It functions in the pathway amino-acid degradation; L-arginine degradation via ADI pathway; carbamoyl phosphate from L-arginine: step 2/2. Its function is as follows. Reversibly catalyzes the transfer of the carbamoyl group from carbamoyl phosphate (CP) to the N(epsilon) atom of ornithine (ORN) to produce L-citrulline. In Photobacterium profundum (strain SS9), this protein is Ornithine carbamoyltransferase, catabolic.